The sequence spans 1184 residues: Protocadherin-12 (1184 aa).

The N-terminal stretch at 1-24 (MMQLLQLLLGLLGPGGYLFLLGDC) is a signal peptide. The Extracellular portion of the chain corresponds to 25–718 (QEVTTLTVKY…PGALSMSMLT (694 aa)). 5 consecutive Cadherin domains span residues 28–135 (TTLT…QPRF), 136–244 (PKGE…SPAF), 245–352 (AESS…IPSI), 355–460 (TWAS…APVF), and 461–565 (EKSR…APEV). Asparagine 415 is a glycosylation site (N-linked (GlcNAc...) asparagine). N-linked (GlcNAc...) asparagine glycosylation is found at asparagine 582, asparagine 659, and asparagine 662. In terms of domain architecture, Cadherin 6 spans 600 to 711 (PAGTDTPPLA…LRDSARKPGA (112 aa)). The chain crosses the membrane as a helical span at residues 719–739 (VICLAVLLGIFGLILALFMSI). Topologically, residues 740-1184 (CRTEKKDNRA…RGSSSSSRCL (445 aa)) are cytoplasmic. 2 disordered regions span residues 854 to 928 (RQRN…ESGP) and 973 to 1023 (QFQP…DPEE). Serine 859 carries the phosphoserine modification. Positions 1012 to 1023 (PEQEEGPLDPEE) are enriched in acidic residues. Residue serine 1062 is modified to Phosphoserine. The tract at residues 1153-1184 (SAASGMKVQGDPGGKTGTEGKSRGSSSSSRCL) is disordered. Positions 1175-1184 (RGSSSSSRCL) are enriched in low complexity.

Post-translationally, cleaved by ADAM10 close to the transmembrane domain to release the Protocadherin-12, secreted form in the serum. Cleavage results in reduced cellular adhesion in a cell migration assay. In terms of tissue distribution, expressed in highly vascularized tissues including the heart and placenta, but most tissues contain a low level of expression. Prominent expression in the spleen. Present in villous and extravillous trophoblast (at protein level).

The protein resides in the cell membrane. The protein localises to the cell junction. Its subcellular location is the secreted. Functionally, cellular adhesion molecule that may play an important role in cell-cell interactions at interendothelial junctions. Acts as a regulator of cell migration, probably via increasing cell-cell adhesion. Promotes homotypic calcium-dependent aggregation and adhesion and clusters at intercellular junctions. Unable to bind to catenins, weakly associates with the cytoskeleton. The protein is Protocadherin-12 of Homo sapiens (Human).